The chain runs to 406 residues: ATPase ASNA1 homolog (406 aa).

21–28 (KGGVGKTT) serves as a coordination point for ATP. Residue Asp-62 is part of the active site. Glu-300 and Asn-327 together coordinate ATP. Residues Cys-339 and Cys-342 each contribute to the Zn(2+) site.

It belongs to the arsA ATPase family. In terms of assembly, homodimer.

The protein resides in the cytoplasm. The protein localises to the endoplasmic reticulum. Its function is as follows. ATPase required for the post-translational delivery of tail-anchored (TA) proteins to the endoplasmic reticulum. Recognizes and selectively binds the transmembrane domain of TA proteins in the cytosol. This complex then targets to the endoplasmic reticulum by membrane-bound receptors, where the tail-anchored protein is released for insertion. This process is regulated by ATP binding and hydrolysis. ATP binding drives the homodimer towards the closed dimer state, facilitating recognition of newly synthesized TA membrane proteins. ATP hydrolysis is required for insertion. Subsequently, the homodimer reverts towards the open dimer state, lowering its affinity for the membrane-bound receptor, and returning it to the cytosol to initiate a new round of targeting. This Leishmania braziliensis protein is ATPase ASNA1 homolog.